A 171-amino-acid polypeptide reads, in one-letter code: Co-chaperone protein HscB (171 aa).

The 73-residue stretch at 2–74 (DYFTFFGLPA…LMRAEYLLSL (73 aa)) folds into the J domain.

Belongs to the HscB family. Interacts with HscA and stimulates its ATPase activity. Interacts with IscU.

Functionally, co-chaperone involved in the maturation of iron-sulfur cluster-containing proteins. Seems to help targeting proteins to be folded toward HscA. This Shigella sonnei (strain Ss046) protein is Co-chaperone protein HscB.